A 117-amino-acid chain; its full sequence is Photosystem II reaction center Psb28 protein (117 aa).

This sequence belongs to the Psb28 family. As to quaternary structure, part of the photosystem II complex.

It is found in the cellular thylakoid membrane. This chain is Photosystem II reaction center Psb28 protein, found in Prochlorococcus marinus (strain MIT 9215).